The primary structure comprises 418 residues: Protein fuzzy homolog (418 aa).

This sequence belongs to the fuzzy family. Interacts with rsg1. Interacts with intu and wdpcp; fuz, intu and wdpcp probably form the core CPLANE (ciliogenesis and planar polarity effectors) complex.

It localises to the cytoplasm. It is found in the cytoskeleton. Its subcellular location is the cilium basal body. Probable planar cell polarity effector involved in cilium biogenesis. Proposed to function as core component of the CPLANE (ciliogenesis and planar polarity effectors) complex involved in the recruitment of peripheral IFT-A proteins to basal bodies. May regulate protein and membrane transport to the cilium. May control the organization of the apical actin cytoskeleton, which is essential for the normal orientation of elongating ciliary microtubules. This is Protein fuzzy homolog (fuz) from Xenopus tropicalis (Western clawed frog).